A 90-amino-acid polypeptide reads, in one-letter code: DNA-binding protein HU-beta (90 aa).

Belongs to the bacterial histone-like protein family. In terms of assembly, heterodimer of an alpha and a beta chain.

Histone-like DNA-binding protein which is capable of wrapping DNA to stabilize it, and thus to prevent its denaturation under extreme environmental conditions. The polypeptide is DNA-binding protein HU-beta (hupB) (Escherichia coli O6:H1 (strain CFT073 / ATCC 700928 / UPEC)).